Reading from the N-terminus, the 437-residue chain is Protein translocase subunit SecY (437 aa).

10 consecutive transmembrane segments (helical) span residues 19-39, 69-89, 122-142, 157-177, 189-209, 219-239, 275-295, 318-338, 378-398, and 400-420; these read LFTL…IPGV, LLQI…SIIL, VALA…GALF, IFTT…VMWL, GMSI…LWSI, WIEF…VVFV, GIIP…VVQF, HITV…AISF, GSLY…PLGA, and QNFP…LETV.

Belongs to the SecY/SEC61-alpha family. Component of the Sec protein translocase complex. Heterotrimer consisting of SecY, SecE and SecG subunits. The heterotrimers can form oligomers, although 1 heterotrimer is thought to be able to translocate proteins. Interacts with the ribosome. Interacts with SecDF, and other proteins may be involved. Interacts with SecA.

It is found in the cell membrane. In terms of biological role, the central subunit of the protein translocation channel SecYEG. Consists of two halves formed by TMs 1-5 and 6-10. These two domains form a lateral gate at the front which open onto the bilayer between TMs 2 and 7, and are clamped together by SecE at the back. The channel is closed by both a pore ring composed of hydrophobic SecY resides and a short helix (helix 2A) on the extracellular side of the membrane which forms a plug. The plug probably moves laterally to allow the channel to open. The ring and the pore may move independently. The protein is Protein translocase subunit SecY of Streptomyces scabiei.